The following is a 73-amino-acid chain: Excelsatoxin A (73 aa).

Positions 1-20 (MRFALVAAITIALLVAGSVA) are cleaved as a signal peptide. The propeptide occupies 21–37 (DESSEDIDNIVIKTPLD). 3 disulfide bridges follow: Cys41–Cys58, Cys46–Cys60, and Cys54–Cys69.

Belongs to the gympietide family. In terms of tissue distribution, expressed in trichomes, that are stiff epidermal hairs located on the surface of petioles and leaves. Not expressed in other aerial parts.

The protein localises to the secreted. Neurotoxin certainly responsible for the defensive, persistent, and painful stings of the giant stinging tree. Inhibits inactivation of Nav1.7/SCN9A sodium channel in sensory neurons by directly interacting with TMEM233, a newly described Nav-interacting protein. Has virtually no effect on Nav1.7/SCN9A function in heterologous expression systems and in neurons that do not express TMEM233. Also weakly but significantly affects Nav1.8/SCN10A. Coexpression of TMEM233 with Nav also confers ExTxA sensitivity to Nav1.1-Nav1.6. On the Nav1.7/SCN9A channel, causes a significant hyperpolarizing shift in the voltage dependence of activation. Its effects on Nav currents are irreversible, with no apparent reduction in activity even after repeated wash steps over 30 minutes. Does not show activity on Nav1.9/SCN11A. Does not show insecticidal activities. In vivo, induces nocifensive behavior in mice (licking or biting and shaking or lifting of the affected paw) lasting for approximately 1 hour. This Dendrocnide excelsa (Giant stinging tree) protein is Excelsatoxin A.